The chain runs to 153 residues: Transcriptional repressor NrdR (153 aa).

Residues 3–34 (CPSCFHNGTRVLDSRPVDEGRSIRRRRECESC) fold into a zinc finger. The 91-residue stretch at 49 to 139 (LIVVKKEGTR…VYRQFKDLNV (91 aa)) folds into the ATP-cone domain.

The protein belongs to the NrdR family. Zn(2+) serves as cofactor.

Its function is as follows. Negatively regulates transcription of bacterial ribonucleotide reductase nrd genes and operons by binding to NrdR-boxes. This Bacillus cytotoxicus (strain DSM 22905 / CIP 110041 / 391-98 / NVH 391-98) protein is Transcriptional repressor NrdR.